Consider the following 172-residue polypeptide: Protein GrpE (172 aa).

A disordered region spans residues 1–24 (MNQDHPEFDSEDLAQNPPETDPLK).

The protein belongs to the GrpE family. Homodimer.

It localises to the cytoplasm. Functionally, participates actively in the response to hyperosmotic and heat shock by preventing the aggregation of stress-denatured proteins, in association with DnaK and GrpE. It is the nucleotide exchange factor for DnaK and may function as a thermosensor. Unfolded proteins bind initially to DnaJ; upon interaction with the DnaJ-bound protein, DnaK hydrolyzes its bound ATP, resulting in the formation of a stable complex. GrpE releases ADP from DnaK; ATP binding to DnaK triggers the release of the substrate protein, thus completing the reaction cycle. Several rounds of ATP-dependent interactions between DnaJ, DnaK and GrpE are required for fully efficient folding. This Xanthomonas oryzae pv. oryzae (strain PXO99A) protein is Protein GrpE.